We begin with the raw amino-acid sequence, 238 residues long: tRNA1(Val) (adenine(37)-N6)-methyltransferase (238 aa).

Belongs to the methyltransferase superfamily. tRNA (adenine-N(6)-)-methyltransferase family.

The protein localises to the cytoplasm. It carries out the reaction adenosine(37) in tRNA1(Val) + S-adenosyl-L-methionine = N(6)-methyladenosine(37) in tRNA1(Val) + S-adenosyl-L-homocysteine + H(+). Functionally, specifically methylates the adenine in position 37 of tRNA(1)(Val) (anticodon cmo5UAC). This chain is tRNA1(Val) (adenine(37)-N6)-methyltransferase, found in Shewanella baltica (strain OS195).